Reading from the N-terminus, the 187-residue chain is Adenylate kinase (187 aa).

Position 10–15 (10–15 (GSGKGT)) interacts with ATP. The segment at 30–59 (STGDLLRSEVVAGTPLGLQAKQVMAQGDLV) is NMP. Residues Thr31, Arg36, 57-59 (DLV), 85-88 (GYPR), and Gln92 contribute to the AMP site. The interval 126 to 136 (GRAQAEGREDD) is LID. Residue Arg127 participates in ATP binding. 2 residues coordinate AMP: Arg133 and Arg144. Gly172 contributes to the ATP binding site.

Belongs to the adenylate kinase family. In terms of assembly, monomer.

The protein resides in the cytoplasm. The catalysed reaction is AMP + ATP = 2 ADP. It functions in the pathway purine metabolism; AMP biosynthesis via salvage pathway; AMP from ADP: step 1/1. Functionally, catalyzes the reversible transfer of the terminal phosphate group between ATP and AMP. Plays an important role in cellular energy homeostasis and in adenine nucleotide metabolism. This is Adenylate kinase from Xylella fastidiosa (strain M12).